The sequence spans 135 residues: Protein Wnt-7a (135 aa).

Cystine bridges form between cysteine 3–cysteine 17 and cysteine 5–cysteine 12. Residue serine 9 is the site of O-palmitoleoyl serine; by PORCN attachment. Residues 41–69 (VEPVRASRNKRPTFLKIKKPLSYRKPMDT) are disordered linker. 4 disulfide bridges follow: cysteine 81/cysteine 112, cysteine 97/cysteine 107, cysteine 111/cysteine 134, and cysteine 130/cysteine 131. Residue asparagine 98 is glycosylated (N-linked (GlcNAc...) asparagine).

Belongs to the Wnt family. Palmitoleoylation is required for efficient binding to frizzled receptors. Depalmitoleoylation leads to Wnt signaling pathway inhibition. In terms of tissue distribution, in embryo, in brain and ventral neural tube; in adults, in brain.

It is found in the secreted. It localises to the extracellular space. The protein resides in the extracellular matrix. In terms of biological role, ligand for members of the frizzled family of seven transmembrane receptors that functions in the canonical Wnt/beta-catenin signaling pathway. Plays an important role in embryonic development, including dorsal versus ventral patterning during limb development, skeleton development and urogenital tract development. Required for central nervous system (CNS) angiogenesis and blood-brain barrier regulation. The protein is Protein Wnt-7a (wnt7a) of Xenopus laevis (African clawed frog).